Consider the following 352-residue polypeptide: Biotin synthase (352 aa).

One can recognise a Radical SAM core domain in the interval 44–262 (NRVQVSTLLS…LAVARILMPQ (219 aa)). [4Fe-4S] cluster contacts are provided by Cys-59, Cys-63, and Cys-66. [2Fe-2S] cluster is bound by residues Cys-103, Cys-134, Cys-194, and Arg-266.

This sequence belongs to the radical SAM superfamily. Biotin synthase family. As to quaternary structure, homodimer. Requires [4Fe-4S] cluster as cofactor. [2Fe-2S] cluster serves as cofactor.

It carries out the reaction (4R,5S)-dethiobiotin + (sulfur carrier)-SH + 2 reduced [2Fe-2S]-[ferredoxin] + 2 S-adenosyl-L-methionine = (sulfur carrier)-H + biotin + 2 5'-deoxyadenosine + 2 L-methionine + 2 oxidized [2Fe-2S]-[ferredoxin]. It participates in cofactor biosynthesis; biotin biosynthesis; biotin from 7,8-diaminononanoate: step 2/2. Catalyzes the conversion of dethiobiotin (DTB) to biotin by the insertion of a sulfur atom into dethiobiotin via a radical-based mechanism. In Pseudomonas syringae pv. tomato (strain ATCC BAA-871 / DC3000), this protein is Biotin synthase.